The sequence spans 386 residues: 5-hydroxytryptamine receptor 1B (386 aa).

Residues 1–42 (MEEQGIQCAPPPPAASQTGVPLVNLSHNCSAESHIYQDSIAL) lie on the Extracellular side of the membrane. Asparagine 24 and asparagine 28 each carry an N-linked (GlcNAc...) asparagine glycan. A helical transmembrane segment spans residues 43–68 (PWKVLLVALLALITLATTLSNAFVIA). The Cytoplasmic portion of the chain corresponds to 69 to 82 (TVYRTRKLHTPANY). Residues 83 to 107 (LIASLAVTDLLVSILVMPVSTMYTV) traverse the membrane as a helical segment. Topologically, residues 108–115 (TGRWTLGQ) are extracellular. Residues 116–141 (VVCDFWLSSDITCCTASIMHLCVIAL) traverse the membrane as a helical segment. Cysteine 118 and cysteine 195 are disulfide-bonded. Residues aspartate 125 and threonine 130 each coordinate ergotamine. Residues 142–144 (DRY) carry the DRY motif; important for ligand-induced conformation changes and signaling motif. Residues 142–161 (DRYWAITDAVEYAAKRTPKR) are Cytoplasmic-facing. Residues 162–180 (AAIMIALVWVFSISISLPP) traverse the membrane as a helical segment. The Extracellular segment spans residues 181–201 (FFWRQAKAEEEVLTCLVNTDH). Valine 197 is a binding site for ergotamine. A helical transmembrane segment spans residues 202–225 (VLYTVYSTGGAFYLPTLLLIALYG). Over 226 to 311 (RIYVEARSRI…AARERKATKT (86 aa)) the chain is Cytoplasmic. Residues 255–268 (DSPGSTTSVTSINS) show a composition bias toward polar residues. A disordered region spans residues 255–278 (DSPGSTTSVTSINSRAPDLPSESG). The helical transmembrane segment at 312–333 (LGIILGAFIVCWLPFFIISLVM) threads the bilayer. The Extracellular segment spans residues 334 to 343 (PICKDACWFH). The helical transmembrane segment at 344 to 366 (MATLDFFNWLGYLNSLINPIIYT) threads the bilayer. The NPxxY motif; important for ligand-induced conformation changes and signaling signature appears at 361–365 (NPIIY). The Cytoplasmic segment spans residues 367-386 (MSNEDFKQAFHKLIRFKCAG). The S-palmitoyl cysteine moiety is linked to residue cysteine 384.

Belongs to the G-protein coupled receptor 1 family. In terms of assembly, homodimer. Heterodimer with HTR1D. Post-translationally, phosphorylated. Desensitization of the receptor may be mediated by its phosphorylation. In terms of processing, palmitoylated.

The protein localises to the cell membrane. Functionally, G-protein coupled receptor for 5-hydroxytryptamine (serotonin). Also functions as a receptor for ergot alkaloid derivatives, various anxiolytic and antidepressant drugs and other psychoactive substances, such as lysergic acid diethylamide (LSD). Ligand binding causes a conformation change that triggers signaling via guanine nucleotide-binding proteins (G proteins) and modulates the activity of downstream effectors, such as adenylate cyclase. HTR1B is coupled to G(i)/G(o) G alpha proteins and mediates inhibitory neurotransmission by inhibiting adenylate cyclase activity. Arrestin family members inhibit signaling via G proteins and mediate activation of alternative signaling pathways. Regulates the release of 5-hydroxytryptamine, dopamine and acetylcholine in the brain, and thereby affects neural activity, nociceptive processing, pain perception, mood and behavior. Besides, plays a role in vasoconstriction of cerebral arteries. The sequence is that of 5-hydroxytryptamine receptor 1B (HTR1B) from Cricetulus griseus (Chinese hamster).